Here is a 216-residue protein sequence, read N- to C-terminus: Elongation factor Ts (216 aa).

The segment at 81-84 is involved in Mg(2+) ion dislocation from EF-Tu; it reads TDFV.

Belongs to the EF-Ts family.

Its subcellular location is the cytoplasm. Its function is as follows. Associates with the EF-Tu.GDP complex and induces the exchange of GDP to GTP. It remains bound to the aminoacyl-tRNA.EF-Tu.GTP complex up to the GTP hydrolysis stage on the ribosome. The protein is Elongation factor Ts of Geobacter metallireducens (strain ATCC 53774 / DSM 7210 / GS-15).